The primary structure comprises 205 residues: N-(5'-phosphoribosyl)anthranilate isomerase (205 aa).

It belongs to the TrpF family.

The catalysed reaction is N-(5-phospho-beta-D-ribosyl)anthranilate = 1-(2-carboxyphenylamino)-1-deoxy-D-ribulose 5-phosphate. Its pathway is amino-acid biosynthesis; L-tryptophan biosynthesis; L-tryptophan from chorismate: step 3/5. This chain is N-(5'-phosphoribosyl)anthranilate isomerase, found in Acidiphilium cryptum (strain JF-5).